Reading from the N-terminus, the 126-residue chain is Small ribosomal subunit protein uS12 (126 aa).

Positions 1–28 are disordered; the sequence is MPTIQQLIRSERSKVQKKTKSPALKQCP. At D89 the chain carries 3-methylthioaspartic acid. A disordered region spans residues 104–126; it reads ATGVKDRKQGRSKYGTKREKAKK. A compositionally biased stretch (basic residues) spans 113–126; the sequence is GRSKYGTKREKAKK.

The protein belongs to the universal ribosomal protein uS12 family. In terms of assembly, part of the 30S ribosomal subunit. Contacts proteins S8 and S17. May interact with IF1 in the 30S initiation complex.

With S4 and S5 plays an important role in translational accuracy. Its function is as follows. Interacts with and stabilizes bases of the 16S rRNA that are involved in tRNA selection in the A site and with the mRNA backbone. Located at the interface of the 30S and 50S subunits, it traverses the body of the 30S subunit contacting proteins on the other side and probably holding the rRNA structure together. The combined cluster of proteins S8, S12 and S17 appears to hold together the shoulder and platform of the 30S subunit. The polypeptide is Small ribosomal subunit protein uS12 (Synechocystis sp. (strain ATCC 27184 / PCC 6803 / Kazusa)).